We begin with the raw amino-acid sequence, 21 residues long: FLNALKNFAKTAGKRLKSLLN.

Expressed by the skin glands.

It localises to the secreted. Has antibacterial activity against E.coli HP101BA (MIC=6.4 uM), K.pneumoniae PTCC1388 (MIC=7.3 uM), M.luteus PTCC1625 (MIC=4.7 uM) and S.aureus PTCC1431 (MIC=5.3 uM). Has no or very limited (&lt;3%) hemolytic activity at concentrations of 15 ug/ml and 60 ug/ml, respectively. The polypeptide is Cyanophlyctin (Euphlyctis cyanophlyctis (Skittering frog)).